Reading from the N-terminus, the 995-residue chain is Endo-beta-N-acetylglucosaminidase EndoS (995 aa).

Residues 1 to 36 (MDKHLLVKRTLGCVCAATLMGAALATHHDSLNTVKA) form the signal peptide. The region spanning 112–432 (SLYGGYFRTW…KDATDNIFHS (321 aa)) is the GH18 domain. A glycoprotein-binding residues include histidine 151, tryptophan 153, and arginine 186. Glutamate 235 (proton donor) is an active-site residue. A glycoprotein is bound by residues aspartate 237, glutamine 303, tyrosine 305, glutamate 349, glutamate 350, asparagine 356, and tyrosine 402. LRR repeat units lie at residues 437–460 (SKAL…DFPD), 478–503 (LERF…KFKK), 562–585 (LTGL…DAAT), and 586–609 (LTSL…ENRQ). The carbohydrate-binding module (CBM) stretch occupies residues 765–923 (MVNLAEGATV…VPELQILGYP (159 aa)). Positions 786, 789, 791, 915, and 916 each coordinate Ca(2+). The three-helix bundle (3H) stretch occupies residues 924 to 995 (LPNADTIMKT…CIEKRQLLKK (72 aa)).

This sequence belongs to the glycosyl hydrolase 18 family. In terms of processing, cleaved by SpeB protease; leading to loss of endoglucosidase activity. EndoS is produced and secreted prior to SpeB, suggesting that it is degraded after acting as a host immune evasion factor.

It localises to the secreted. It is found in the host extracellular space. The enzyme catalyses an N(4)-(oligosaccharide-(1-&gt;3)-[oligosaccharide-(1-&gt;6)]-beta-D-Man-(1-&gt;4)-beta-D-GlcNAc-(1-&gt;4)-alpha-D-GlcNAc)-L-asparaginyl-[protein] + H2O = an oligosaccharide-(1-&gt;3)-[oligosaccharide-(1-&gt;6)]-beta-D-Man-(1-&gt;4)-D-GlcNAc + N(4)-(N-acetyl-beta-D-glucosaminyl)-L-asparaginyl-[protein]. Endoglucosidase that acts as a host immune evasion factor by mediating hydrolysis of the N-linked glycan from the Fc region of host immunoglobulin-gamma (IgG) during infection. Specifically catalyzes the hydrolysis of the beta-1,4 linkage between the first two N-acetylglucosamine residues of the complex-type N-linked glycan located on 'Asn-297' of the Fc region of IgG antibodies (IGHG1, IGHG2, IGHG3 or IGHG4), thereby preventing interaction between IgGs and Fc receptors and ability to activate the complement pathway. Shows a specificity for biantennary complex type N-glycans; does neither cleave larger complex type glycans nor oligomannose and nor hybrid-type glycans. Specifically acts on IgGs; does not act on immunoglobulin alpha, beta, delta or mu. This is Endo-beta-N-acetylglucosaminidase EndoS from Streptococcus pyogenes serotype M1.